We begin with the raw amino-acid sequence, 177 residues long: Ribonuclease clavin (177 aa).

The N-terminal stretch at 1 to 27 (MVAIKNLVLVALTAVTALAMPSPLEER) is a signal peptide. 2 disulfides stabilise this stretch: Cys33-Cys175 and Cys103-Cys159. His77 is an active-site residue. Residues 98–117 (WGNSDCDRPPKHSKNGDGKN) form a disordered region. A compositionally biased stretch (basic and acidic residues) spans 102–117 (DCDRPPKHSKNGDGKN). Catalysis depends on Glu123, which acts as the Proton acceptor. The Proton donor role is filled by His164.

The protein belongs to the ribonuclease U2 family.

The protein localises to the secreted. In terms of biological role, clavin has the same substrate specificity as alpha-sarcin. It is specific for purines in both single- and double-stranded RNA. Its toxic action on eukaryotic cells is the result of cleavage of a single phosphodiester bond in the 60S subunit of ribosomes. The chain is Ribonuclease clavin (cla) from Aspergillus clavatus (strain ATCC 1007 / CBS 513.65 / DSM 816 / NCTC 3887 / NRRL 1 / QM 1276 / 107).